We begin with the raw amino-acid sequence, 143 residues long: uncharacterized protein (143 aa).

Cysteine 12 is an active-site residue.

Belongs to the ArsC family.

This is an uncharacterized protein from Rhodospirillum rubrum.